We begin with the raw amino-acid sequence, 278 residues long: Large ribosomal subunit protein uL2 (278 aa).

Positions 218–278 (RPHNRGVVMN…IMRSRHQRKK (61 aa)) are disordered.

It belongs to the universal ribosomal protein uL2 family. In terms of assembly, part of the 50S ribosomal subunit. Forms a bridge to the 30S subunit in the 70S ribosome.

Its function is as follows. One of the primary rRNA binding proteins. Required for association of the 30S and 50S subunits to form the 70S ribosome, for tRNA binding and peptide bond formation. It has been suggested to have peptidyltransferase activity; this is somewhat controversial. Makes several contacts with the 16S rRNA in the 70S ribosome. The sequence is that of Large ribosomal subunit protein uL2 from Rhizobium etli (strain CIAT 652).